Here is an 879-residue protein sequence, read N- to C-terminus: Phosphoenolpyruvate carboxylase (879 aa).

Active-site residues include histidine 137 and lysine 545.

The protein belongs to the PEPCase type 1 family. Mg(2+) serves as cofactor.

It carries out the reaction oxaloacetate + phosphate = phosphoenolpyruvate + hydrogencarbonate. In terms of biological role, forms oxaloacetate, a four-carbon dicarboxylic acid source for the tricarboxylic acid cycle. This chain is Phosphoenolpyruvate carboxylase, found in Yersinia enterocolitica serotype O:8 / biotype 1B (strain NCTC 13174 / 8081).